A 362-amino-acid polypeptide reads, in one-letter code: Alpha-tubulin N-acetyltransferase (362 aa).

Positions 1-177 constitute an N-acetyltransferase domain; sequence MQFGCNVAEA…NNFLMLDASI (177 aa). Acetyl-CoA is bound by residues 111–124 and 147–156; these read FYTHETVQRRGIGT and SPKLLAFLSK.

It belongs to the acetyltransferase ATAT1 family.

The catalysed reaction is L-lysyl-[alpha-tubulin] + acetyl-CoA = N(6)-acetyl-L-lysyl-[alpha-tubulin] + CoA + H(+). Functionally, specifically acetylates 'Lys-40' in alpha-tubulin on the lumenal side of microtubules. Promotes microtubule destabilization and accelerates microtubule dynamics; this activity may be independent of acetylation activity. Acetylates alpha-tubulin with a slow enzymatic rate, due to a catalytic site that is not optimized for acetyl transfer. Enters the microtubule through each end and diffuses quickly throughout the lumen of microtubules. Acetylates only long/old microtubules because of its slow acetylation rate since it does not have time to act on dynamically unstable microtubules before the enzyme is released. The chain is Alpha-tubulin N-acetyltransferase from Giardia intestinalis (strain ATCC 50803 / WB clone C6) (Giardia lamblia).